A 255-amino-acid polypeptide reads, in one-letter code: Pimeloyl-[acyl-carrier protein] methyl ester esterase (255 aa).

Residues 16–242 (LVLLHGWGLN…AAHAPFISHP (227 aa)) enclose the AB hydrolase-1 domain. Substrate is bound by residues Trp22, 82-83 (SL), and 143-147 (FLALQ). The active-site Nucleophile is Ser82. Residues Asp207 and His235 contribute to the active site. His235 contacts substrate.

This sequence belongs to the AB hydrolase superfamily. Carboxylesterase BioH family. Monomer.

It is found in the cytoplasm. It catalyses the reaction 6-carboxyhexanoyl-[ACP] methyl ester + H2O = 6-carboxyhexanoyl-[ACP] + methanol + H(+). Its pathway is cofactor biosynthesis; biotin biosynthesis. In terms of biological role, the physiological role of BioH is to remove the methyl group introduced by BioC when the pimeloyl moiety is complete. It allows to synthesize pimeloyl-ACP via the fatty acid synthetic pathway through the hydrolysis of the ester bonds of pimeloyl-ACP esters. The sequence is that of Pimeloyl-[acyl-carrier protein] methyl ester esterase from Pectobacterium carotovorum subsp. carotovorum (strain PC1).